Here is a 235-residue protein sequence, read N- to C-terminus: Elongation factor Tu (235 aa).

Residues 1-125 (KNMITGAAQM…QVDEYIPAPE (125 aa)) form the tr-type G domain. 47-50 (NKQD) lines the GTP pocket.

The protein belongs to the TRAFAC class translation factor GTPase superfamily. Classic translation factor GTPase family. EF-Tu/EF-1A subfamily. Monomer.

The protein localises to the cytoplasm. It catalyses the reaction GTP + H2O = GDP + phosphate + H(+). In terms of biological role, GTP hydrolase that promotes the GTP-dependent binding of aminoacyl-tRNA to the A-site of ribosomes during protein biosynthesis. The polypeptide is Elongation factor Tu (tufA) (Leptolyngbya ectocarpi (Phormidium ectocarpi)).